The primary structure comprises 377 residues: Queuine tRNA-ribosyltransferase (377 aa).

Aspartate 89 functions as the Proton acceptor in the catalytic mechanism. Residues 89 to 93 (DSGGF), aspartate 143, glutamine 187, and glycine 214 contribute to the substrate site. The interval 245–251 (GVGKPED) is RNA binding. Aspartate 264 functions as the Nucleophile in the catalytic mechanism. The RNA binding; important for wobble base 34 recognition stretch occupies residues 269–273 (TRNAR). Positions 302, 304, 307, and 333 each coordinate Zn(2+).

This sequence belongs to the queuine tRNA-ribosyltransferase family. Homodimer. Within each dimer, one monomer is responsible for RNA recognition and catalysis, while the other monomer binds to the replacement base PreQ1. Requires Zn(2+) as cofactor.

The enzyme catalyses 7-aminomethyl-7-carbaguanine + guanosine(34) in tRNA = 7-aminomethyl-7-carbaguanosine(34) in tRNA + guanine. It participates in tRNA modification; tRNA-queuosine biosynthesis. Catalyzes the base-exchange of a guanine (G) residue with the queuine precursor 7-aminomethyl-7-deazaguanine (PreQ1) at position 34 (anticodon wobble position) in tRNAs with GU(N) anticodons (tRNA-Asp, -Asn, -His and -Tyr). Catalysis occurs through a double-displacement mechanism. The nucleophile active site attacks the C1' of nucleotide 34 to detach the guanine base from the RNA, forming a covalent enzyme-RNA intermediate. The proton acceptor active site deprotonates the incoming PreQ1, allowing a nucleophilic attack on the C1' of the ribose to form the product. After dissociation, two additional enzymatic reactions on the tRNA convert PreQ1 to queuine (Q), resulting in the hypermodified nucleoside queuosine (7-(((4,5-cis-dihydroxy-2-cyclopenten-1-yl)amino)methyl)-7-deazaguanosine). The chain is Queuine tRNA-ribosyltransferase from Shewanella piezotolerans (strain WP3 / JCM 13877).